A 248-amino-acid polypeptide reads, in one-letter code: Tetraspanin-18 (248 aa).

At 1–13 (MEGDCLSCMKYLM) the chain is on the cytoplasmic side. Residues 14 to 34 (FVFNFFIFLGGACLLAIGIWV) traverse the membrane as a helical segment. Topologically, residues 35–49 (MVDPTGFREIVAANP) are extracellular. Residues 50 to 70 (LLLTGAYILLAMGGLLFLLGF) form a helical membrane-spanning segment. Residues 71–83 (LGCCGAVRENKCL) are Cytoplasmic-facing. Residues 84-104 (LLFFFLFILIIFLAELSAAIL) traverse the membrane as a helical segment. The Extracellular portion of the chain corresponds to 105 to 223 (AFIFRENLTR…TFETYVYLAG (119 aa)). N-linked (GlcNAc...) asparagine glycosylation is found at Asn-111 and Asn-129. The helical transmembrane segment at 224 to 244 (ALAIGVLAIELFAMIFAMCLF) threads the bilayer. Residues 245-248 (RGIQ) lie on the Cytoplasmic side of the membrane.

This sequence belongs to the tetraspanin (TM4SF) family. In terms of assembly, interacts with ORAI1; this interaction regulates ORAI1 exit from the endoplasmic (ER), and/or Golgi, and trafficking to the cell surface. In terms of tissue distribution, highly expressed in primary endothelial cells. Expressed in the embryo heart. Weakly expressed the embryo skeletal muscle.

It localises to the membrane. Its function is as follows. Plays a role in the cell surface localization of ORAI1 and may participate in the regulation of Ca(2+) signaling and the VWF release in response to inflammatory stimuli. The protein is Tetraspanin-18 of Homo sapiens (Human).